A 604-amino-acid chain; its full sequence is Elongation factor 4 (604 aa).

One can recognise a tr-type G domain in the interval 4 to 186 (EFIRNFSIIA…AIVHLVPPPK (183 aa)). GTP is bound by residues 16-21 (DHGKST) and 133-136 (NKID).

Belongs to the TRAFAC class translation factor GTPase superfamily. Classic translation factor GTPase family. LepA subfamily.

Its subcellular location is the cell inner membrane. It carries out the reaction GTP + H2O = GDP + phosphate + H(+). In terms of biological role, required for accurate and efficient protein synthesis under certain stress conditions. May act as a fidelity factor of the translation reaction, by catalyzing a one-codon backward translocation of tRNAs on improperly translocated ribosomes. Back-translocation proceeds from a post-translocation (POST) complex to a pre-translocation (PRE) complex, thus giving elongation factor G a second chance to translocate the tRNAs correctly. Binds to ribosomes in a GTP-dependent manner. The polypeptide is Elongation factor 4 (Solibacter usitatus (strain Ellin6076)).